The chain runs to 331 residues: Aspartate carbamoyltransferase catalytic subunit (331 aa).

Carbamoyl phosphate is bound by residues Arg66 and Thr67. Lys94 contributes to the L-aspartate binding site. Arg116, His149, and Gln152 together coordinate carbamoyl phosphate. Residues Arg189 and Arg243 each contribute to the L-aspartate site. 2 residues coordinate carbamoyl phosphate: Gly284 and Pro285.

It belongs to the aspartate/ornithine carbamoyltransferase superfamily. ATCase family. As to quaternary structure, heterododecamer (2C3:3R2) of six catalytic PyrB chains organized as two trimers (C3), and six regulatory PyrI chains organized as three dimers (R2).

It carries out the reaction carbamoyl phosphate + L-aspartate = N-carbamoyl-L-aspartate + phosphate + H(+). It functions in the pathway pyrimidine metabolism; UMP biosynthesis via de novo pathway; (S)-dihydroorotate from bicarbonate: step 2/3. In terms of biological role, catalyzes the condensation of carbamoyl phosphate and aspartate to form carbamoyl aspartate and inorganic phosphate, the committed step in the de novo pyrimidine nucleotide biosynthesis pathway. The protein is Aspartate carbamoyltransferase catalytic subunit of Thermosynechococcus vestitus (strain NIES-2133 / IAM M-273 / BP-1).